The sequence spans 310 residues: Apolipoprotein E (310 aa).

The signal sequence occupies residues 1–18; it reads MKVLWAALVVTLLAGCQA. A run of 8 repeats spans residues 77–98, 99–120, 121–142, 143–164, 165–186, 187–204, 205–226, and 227–248. The 8 X 22 AA approximate tandem repeats stretch occupies residues 77-248; it reads VLIEETMKEV…RLDEVREQVQ (172 aa). M140 bears the Methionine sulfoxide mark. S144 carries the phosphoserine modification. The LDL and other lipoprotein receptors binding stretch occupies residues 155–165; that stretch reads HLRKLRKRLLR. 159-162 contributes to the heparin binding site; the sequence is LRKR. Residues 203–283 form a lipid-binding and lipoprotein association region; that stretch reads AATVRSLVSK…SWFEPLVQDM (81 aa). A heparin-binding site is contributed by 222–229; that stretch reads GQRLRGRL. The homooligomerization stretch occupies residues 259-310; sequence NQMRLQAEAFHARLKSWFEPLVQDMQQRWAELVEKVQLAVGTSPTSESSEKQ. Residues 271–283 are specificity for association with VLDL; sequence RLKSWFEPLVQDM.

It belongs to the apolipoprotein A1/A4/E family. In terms of assembly, homotetramer. May interact with ABCA1; functionally associated with ABCA1 in the biogenesis of HDLs. May interact with APP/A4 amyloid-beta peptide; the interaction is extremely stable in vitro but its physiological significance is unclear. May interact with MAPT. May interact with MAP2. In the cerebrospinal fluid, interacts with secreted SORL1. Interacts with PMEL; this allows the loading of PMEL luminal fragment on ILVs to induce fibril nucleation. APOE exists as multiple glycosylated and sialylated glycoforms within cells and in plasma. The extent of glycosylation and sialylation are tissue and context specific. Post-translationally, glycated in plasma VLDL. In terms of processing, phosphorylated by FAM20C in the extracellular medium.

It is found in the secreted. It localises to the extracellular space. Its subcellular location is the extracellular matrix. The protein resides in the extracellular vesicle. The protein localises to the endosome. It is found in the multivesicular body. APOE is an apolipoprotein, a protein associating with lipid particles, that mainly functions in lipoprotein-mediated lipid transport between organs via the plasma and interstitial fluids. APOE is a core component of plasma lipoproteins and is involved in their production, conversion and clearance. Apolipoproteins are amphipathic molecules that interact both with lipids of the lipoprotein particle core and the aqueous environment of the plasma. As such, APOE associates with chylomicrons, chylomicron remnants, very low density lipoproteins (VLDL) and intermediate density lipoproteins (IDL) but shows a preferential binding to high-density lipoproteins (HDL). It also binds a wide range of cellular receptors including the LDL receptor/LDLR, the LDL receptor-related proteins LRP1, LRP2 and LRP8 and the very low-density lipoprotein receptor/VLDLR that mediate the cellular uptake of the APOE-containing lipoprotein particles. Finally, APOE also has a heparin-binding activity and binds heparan-sulfate proteoglycans on the surface of cells, a property that supports the capture and the receptor-mediated uptake of APOE-containing lipoproteins by cells. A main function of APOE is to mediate lipoprotein clearance through the uptake of chylomicrons, VLDLs, and HDLs by hepatocytes. APOE is also involved in the biosynthesis by the liver of VLDLs as well as their uptake by peripheral tissues ensuring the delivery of triglycerides and energy storage in muscle, heart and adipose tissues. By participating in the lipoprotein-mediated distribution of lipids among tissues, APOE plays a critical role in plasma and tissues lipid homeostasis. APOE is also involved in two steps of reverse cholesterol transport, the HDLs-mediated transport of cholesterol from peripheral tissues to the liver, and thereby plays an important role in cholesterol homeostasis. First, it is functionally associated with ABCA1 in the biogenesis of HDLs in tissues. Second, it is enriched in circulating HDLs and mediates their uptake by hepatocytes. APOE also plays an important role in lipid transport in the central nervous system, regulating neuron survival and sprouting. The chain is Apolipoprotein E (APOE) from Tapirus indicus (Asiatic tapir).